Reading from the N-terminus, the 342-residue chain is Uroporphyrinogen decarboxylase (342 aa).

Residues 24-28 (RQAGR), Asp-74, Tyr-151, Ser-206, and His-322 contribute to the substrate site.

Belongs to the uroporphyrinogen decarboxylase family. As to quaternary structure, homodimer.

It localises to the cytoplasm. The enzyme catalyses uroporphyrinogen III + 4 H(+) = coproporphyrinogen III + 4 CO2. It participates in porphyrin-containing compound metabolism; protoporphyrin-IX biosynthesis; coproporphyrinogen-III from 5-aminolevulinate: step 4/4. Its function is as follows. Catalyzes the decarboxylation of four acetate groups of uroporphyrinogen-III to yield coproporphyrinogen-III. The chain is Uroporphyrinogen decarboxylase from Paracoccus denitrificans (strain Pd 1222).